The following is a 320-amino-acid chain: 7-acetyl-epi-neemfruitin B aldo-keto reductase (320 aa).

D51 contacts NADP(+). Y56 functions as the Proton donor in the catalytic mechanism. Residues Q186 and 264–272 (FNKQRMEEN) each bind NADP(+).

This sequence belongs to the aldo/keto reductase family. In terms of tissue distribution, mainly expressed in petioles and, to a lower extent, in roots.

The catalysed reaction is 7-acetyl-epi-neemfruitin B + AH2 + H2O = (1S,3bR,4R,5aR,9aR,9bR,11aS)-1-[(4R)-5-[(2S)-3,3-dimethyloxiran-2-yl]-1,4-dihydroxybutan-2-yl]-3b,6,6,9a,11a-pentamethyl-7-oxo-1H,2H,3bH,4H,5H,5aH,6H,7H,9aH,9bH,10H,11H,11aH-cyclopenta[a]phenanthren-4-yl acetate + acetate + A + H(+). Its pathway is secondary metabolite biosynthesis; terpenoid biosynthesis. In terms of biological role, aldo-keto reductase involved in the biosynthesis of limonoids triterpene natural products such as azadirachtin, an antifeedant widely used as bioinsecticide, and possessing many medicinal applications including anti-tumoral, anti-malarial, anti-rheumatic, antibacterial, anti-inflammatory, anti-pyretic and diuretic effects. Can use 7-acetyl-epi-neemfruitin B as substrate. This Melia azedarach (Chinaberry tree) protein is 7-acetyl-epi-neemfruitin B aldo-keto reductase.